The primary structure comprises 68 residues: Tabimmunregulin 1 (68 aa).

An N-terminal signal peptide occupies residues 1–26 (MLLKSYVFFLLSLLIVGLFTSRDADA). The propeptide occupies 27–38 (QYEDLVTGYLRK).

In terms of tissue distribution, expressed in salivary glands.

The protein resides in the secreted. Horsefly salivary gland immunosuppressant protein that likely inhibits the host inflammatory response by regulation of anti- and pro-inflammatory cytokines. When tested on mouse splenocytes in the presence of LPS, it increases the secretion of the proinflammatory cytokine interleukin-10 (IL10) and decreases the secretion of the proinflammatory cytokine interferon-gamma (IFNG) in a dose-dependent manner. The polypeptide is Tabimmunregulin 1 (Tabanus yao (Horsefly)).